We begin with the raw amino-acid sequence, 192 residues long: Peptidyl-tRNA hydrolase (192 aa).

Residue Y17 participates in tRNA binding. Residue H22 is the Proton acceptor of the active site. Residues Y68, N70, and N116 each coordinate tRNA.

Belongs to the PTH family. As to quaternary structure, monomer.

The protein resides in the cytoplasm. It catalyses the reaction an N-acyl-L-alpha-aminoacyl-tRNA + H2O = an N-acyl-L-amino acid + a tRNA + H(+). In terms of biological role, hydrolyzes ribosome-free peptidyl-tRNAs (with 1 or more amino acids incorporated), which drop off the ribosome during protein synthesis, or as a result of ribosome stalling. Catalyzes the release of premature peptidyl moieties from peptidyl-tRNA molecules trapped in stalled 50S ribosomal subunits, and thus maintains levels of free tRNAs and 50S ribosomes. In Mycobacterium sp. (strain JLS), this protein is Peptidyl-tRNA hydrolase.